Here is a 333-residue protein sequence, read N- to C-terminus: 3-isopropylmalate/3-methylmalate dehydrogenase (333 aa).

4 residues coordinate substrate: Arg-81, Arg-91, Arg-112, and Asp-203. Mg(2+) is bound by residues Asp-203, Asp-227, and Asp-231. 260–272 lines the NAD(+) pocket; the sequence is GSAPDIAGKKIAN.

Belongs to the isocitrate and isopropylmalate dehydrogenases family. In terms of assembly, homotetramer. Mg(2+) serves as cofactor. Mn(2+) is required as a cofactor.

Its subcellular location is the cytoplasm. The enzyme catalyses (2R,3S)-3-isopropylmalate + NAD(+) = 4-methyl-2-oxopentanoate + CO2 + NADH. It carries out the reaction (2R,3S)-3-methylmalate + NAD(+) = 2-oxobutanoate + CO2 + NADH. The catalysed reaction is (R)-malate + NAD(+) = pyruvate + CO2 + NADH. It functions in the pathway amino-acid biosynthesis; L-leucine biosynthesis; L-leucine from 3-methyl-2-oxobutanoate: step 3/4. The protein operates within amino-acid biosynthesis; L-isoleucine biosynthesis; 2-oxobutanoate from pyruvate: step 3/3. Catalyzes the oxidation of 3-carboxy-2-hydroxy-4-methylpentanoate (3-isopropylmalate) to 3-carboxy-4-methyl-2-oxopentanoate, which decarboxylates to 4-methyl-2-oxopentanoate (2-oxoisocaproate). Also catalyzes the oxidative decarboxylation of 3-methylmalate to 2-oxobutyrate, and that of D-malate to pyruvate. Cannot use NADP(+) instead of NAD(+). Cannot catalyze the oxidation of L-malate, L-tartrate, D-tartrate, DL-isocitrate, or DL-lactate. In Methanocaldococcus jannaschii (strain ATCC 43067 / DSM 2661 / JAL-1 / JCM 10045 / NBRC 100440) (Methanococcus jannaschii), this protein is 3-isopropylmalate/3-methylmalate dehydrogenase (leuB).